Reading from the N-terminus, the 154-residue chain is Bacterial ferritin (154 aa).

The Ferritin-like diiron domain occupies 1–145; sequence MQGHPEVIDY…QQLGLIARMG (145 aa). Residues Glu18, His46, Glu47, Glu50, Glu51, His54, Glu93, Asp129, and His130 each coordinate Fe(3+).

It belongs to the bacterioferritin family. As to quaternary structure, the bacterioferritin (BFR) complex is formed of 24 subunits (FtnA and BfrB) arranged as 12 homodimers. The holocomplex contains about 8.7% Fe and 8.0% phosphate. In vivo purifies with BfrB in varying ratios, depending on the O(2) content; as O(2) decreases FtnA content rises. Pure FtnA BFR complexes are not isolated in situ, although in a bfrB deletion some iron will accumulate in FtnA ferritin complexes. Upon crystallization forms homooligomers of 24 subunits, the BFR complex, arranged as 12 dimers, that are packed together to form an approximately spherical molecule with a central cavity, in which large amounts of iron can be deposited. The BFR shell has three- and four-fold pores; Fe(2+) may move in and out of the shell via the four-fold pores. Does not interact with Bfd.

The protein resides in the cytoplasm. It catalyses the reaction 4 Fe(2+) + O2 + 4 H(+) = 4 Fe(3+) + 2 H2O. The enzyme catalyses Fe(2+)(in) = Fe(2+)(out). Its function is as follows. Plays a role in catalase A (katA) expression; activity is required for optimal KatA activity and resistance to H(2)O(2). Iron-storage protein that is part of the heterooligomeric bacterioferritin (BFR) complex. The ferroxidase center binds Fe(2+), oxidizes it using dioxygen to Fe(3+), and participates in subsequent Fe(3+) oxide mineral core formation within the central cavity of the BFR protein shell. Can store up to 520 iron atoms per ferritin protein molecule. Iron release requires only the input of electrons from ferredoxin NADP reductase (FPR), does not require Bfd. Does not bind heme. This chain is Bacterial ferritin, found in Pseudomonas aeruginosa (strain ATCC 15692 / DSM 22644 / CIP 104116 / JCM 14847 / LMG 12228 / 1C / PRS 101 / PAO1).